Consider the following 246-residue polypeptide: Uridylate kinase (246 aa).

Position 11 to 14 (11 to 14) interacts with ATP; that stretch reads KLSG. A UMP-binding site is contributed by glycine 53. ATP-binding residues include glycine 54 and arginine 58. UMP contacts are provided by residues aspartate 73 and 134–141; that span reads TGNPYFTT. ATP contacts are provided by threonine 161, tyrosine 167, and aspartate 170.

Belongs to the UMP kinase family. Homohexamer.

It is found in the cytoplasm. It carries out the reaction UMP + ATP = UDP + ADP. The protein operates within pyrimidine metabolism; CTP biosynthesis via de novo pathway; UDP from UMP (UMPK route): step 1/1. Its activity is regulated as follows. Inhibited by UTP. Its function is as follows. Catalyzes the reversible phosphorylation of UMP to UDP. The polypeptide is Uridylate kinase (Leptospira borgpetersenii serovar Hardjo-bovis (strain JB197)).